The following is a 225-amino-acid chain: Protein GrpE (225 aa).

The span at 1 to 15 (MSGDASTPEQDQNVV) shows a compositional bias: polar residues. Disordered stretches follow at residues 1-48 (MSGD…DRMQ) and 198-225 (VSMG…AEEA). Residues 201-225 (GPGPSDPGSAPAEAAAAPDQTAEEA) show a composition bias toward low complexity.

Belongs to the GrpE family. Homodimer.

It is found in the cytoplasm. Its function is as follows. Participates actively in the response to hyperosmotic and heat shock by preventing the aggregation of stress-denatured proteins, in association with DnaK and GrpE. It is the nucleotide exchange factor for DnaK and may function as a thermosensor. Unfolded proteins bind initially to DnaJ; upon interaction with the DnaJ-bound protein, DnaK hydrolyzes its bound ATP, resulting in the formation of a stable complex. GrpE releases ADP from DnaK; ATP binding to DnaK triggers the release of the substrate protein, thus completing the reaction cycle. Several rounds of ATP-dependent interactions between DnaJ, DnaK and GrpE are required for fully efficient folding. The protein is Protein GrpE of Synechococcus sp. (strain CC9605).